A 102-amino-acid polypeptide reads, in one-letter code: Large ribosomal subunit protein bL21 (102 aa).

It belongs to the bacterial ribosomal protein bL21 family. As to quaternary structure, part of the 50S ribosomal subunit. Contacts protein L20.

In terms of biological role, this protein binds to 23S rRNA in the presence of protein L20. The sequence is that of Large ribosomal subunit protein bL21 from Campylobacter hominis (strain ATCC BAA-381 / DSM 21671 / CCUG 45161 / LMG 19568 / NCTC 13146 / CH001A).